An 89-amino-acid chain; its full sequence is Small ribosomal subunit protein uS15 (89 aa).

The tract at residues 1–22 (MPLSKEQKQEVMEKYKLHEHDT) is disordered.

It belongs to the universal ribosomal protein uS15 family. In terms of assembly, part of the 30S ribosomal subunit. Forms a bridge to the 50S subunit in the 70S ribosome, contacting the 23S rRNA.

Functionally, one of the primary rRNA binding proteins, it binds directly to 16S rRNA where it helps nucleate assembly of the platform of the 30S subunit by binding and bridging several RNA helices of the 16S rRNA. Forms an intersubunit bridge (bridge B4) with the 23S rRNA of the 50S subunit in the ribosome. In Natranaerobius thermophilus (strain ATCC BAA-1301 / DSM 18059 / JW/NM-WN-LF), this protein is Small ribosomal subunit protein uS15.